A 518-amino-acid chain; its full sequence is Membrane-bound lytic murein transglycosylase F (518 aa).

The signal sequence occupies residues 1–21; it reads MKKLKINYLFIGILALLLAVA. The tract at residues 22–269 is non-LT domain; sequence LWPSIPWFGK…RIEEKYLGHG (248 aa). The segment at 270–518 is LT domain; the sequence is DDFDYVDTRT…SRKGSEEKQN (249 aa). The active site involves Glu-314.

It in the N-terminal section; belongs to the bacterial solute-binding protein 3 family. The protein in the C-terminal section; belongs to the transglycosylase Slt family.

Its subcellular location is the cell outer membrane. It carries out the reaction Exolytic cleavage of the (1-&gt;4)-beta-glycosidic linkage between N-acetylmuramic acid (MurNAc) and N-acetylglucosamine (GlcNAc) residues in peptidoglycan, from either the reducing or the non-reducing ends of the peptidoglycan chains, with concomitant formation of a 1,6-anhydrobond in the MurNAc residue.. Murein-degrading enzyme that degrades murein glycan strands and insoluble, high-molecular weight murein sacculi, with the concomitant formation of a 1,6-anhydromuramoyl product. Lytic transglycosylases (LTs) play an integral role in the metabolism of the peptidoglycan (PG) sacculus. Their lytic action creates space within the PG sacculus to allow for its expansion as well as for the insertion of various structures such as secretion systems and flagella. This Shigella sonnei (strain Ss046) protein is Membrane-bound lytic murein transglycosylase F.